The chain runs to 65 residues: Large ribosomal subunit protein bL35 (65 aa).

The protein belongs to the bacterial ribosomal protein bL35 family.

This chain is Large ribosomal subunit protein bL35, found in Phytoplasma mali (strain AT).